Here is a 500-residue protein sequence, read N- to C-terminus: Glucose-1-phosphate adenylyltransferase large subunit, chloroplastic/amyloplastic (500 aa).

The transit peptide at 1 to 33 (RASPPSESRAPLRAPQRSATRQHQARQGPRRMC) directs the protein to the chloroplast. Residues 1 to 47 (RASPPSESRAPLRAPQRSATRQHQARQGPRRMCNGGRGPPYWTAGVT) are disordered.

Belongs to the bacterial/plant glucose-1-phosphate adenylyltransferase family. In terms of assembly, heterotetramer.

It localises to the plastid. It is found in the chloroplast. The protein resides in the amyloplast. The enzyme catalyses alpha-D-glucose 1-phosphate + ATP + H(+) = ADP-alpha-D-glucose + diphosphate. Its pathway is glycan biosynthesis; starch biosynthesis. Its activity is regulated as follows. Insensitive to 3'phosphoglycerate and orthophosphate. Functionally, this protein plays a role in synthesis of starch. It catalyzes the synthesis of the activated glycosyl donor, ADP-glucose from Glc-1-P and ATP. The protein is Glucose-1-phosphate adenylyltransferase large subunit, chloroplastic/amyloplastic (AGA.7) of Triticum aestivum (Wheat).